Reading from the N-terminus, the 544-residue chain is Inward rectifier potassium channel irk-1 (544 aa).

Residues 1 to 109 are Cytoplasmic-facing; sequence MTLSVPDCAE…IFTTMIDVKW (109 aa). Residues 110–134 traverse the membrane as a helical segment; the sequence is RWMLMLFASAFVLSWSIFGTTYYLI. The Extracellular portion of the chain corresponds to 135-158; the sequence is ALVHGDLSLPTPVNHTACVMNLDS. Positions 159 to 170 form an intramembrane region, helical; Pore-forming; that stretch reads VYSSFLFAVETH. Positions 171–177 form an intramembrane region, pore-forming; sequence HTIGYGH. A Selectivity filter motif is present at residues 172 to 177; the sequence is TIGYGH. Residues 178 to 186 lie on the Extracellular side of the membrane; that stretch reads RYITTECYL. Residues 187–208 form a helical membrane-spanning segment; that stretch reads AGAIVCLQAICALLLQSFMVGI. Over 209–544 the chain is Cytoplasmic; the sequence is VFAKMARPKK…PIHIEIVSET (336 aa). Disordered regions lie at residues 411-448 and 512-533; these read HKLEDNRSSDSTPLPSPSPYSYPSTPLNHFQSSSNSPV and LSDLEEECSDSGSPTKCQSPPV. The span at 438–448 shows a compositional bias: polar residues; the sequence is NHFQSSSNSPV.

The protein belongs to the inward rectifier-type potassium channel (TC 1.A.2.1) family. As to expression, expressed in neurons in the head and tail with no expression detected in non-neuronal cells in these regions. Also detected in the egg-laying system of adult hermaphordites with strong expression in the HSN motor neurons and weak expression in vulval muscles.

Its subcellular location is the membrane. The protein resides in the perikaryon. It is found in the cell projection. Functionally, inward rectifier potassium channels are characterized by a greater tendency to allow potassium to flow into the cell rather than out of it. Required for modulation of the activity of the hermaphrodite-specific neurons (HSNs) by the G-protein coupled neuropeptide receptor egl-6 which in turn controls egg-laying behavior. The sequence is that of Inward rectifier potassium channel irk-1 (irk-1) from Caenorhabditis elegans.